The primary structure comprises 378 residues: MSTPRIVVGVSGGVDSSVAAWKLAQQGEPIAGLFMQNWADDGSGDCRAEDDRRDAVAVCGVLGIPFHFRDFSGEYWSDVFEHFLAEYAAGRTPNPDVLCNREVKFKHFLDAAQALGAERIATGHYAQVAHRGGRWRLLRGADRGKDQSYFLHQLGQTQLAATLFPIGDLEKSTLRRIAQDAGLPTHAKKDSTGICFIGERDFREFLGRYLPARTGEIRDPQGQRIAEHPGVFYFTLGQREGLNIGGVRGRAAAPWYVVGKDVANNVLYVDQDRDSPLLQSRWLQSEQAHWVTGAPPARRFSCTAQTRYRQPDESCTVDVQDDGSVQVRFERPQRAVTPGQSLVLYDGEECLGGAVIAATDAPLERQLAGSSFSSEVVA.

ATP-binding positions include 9–16 and M35; that span reads GVSGGVDS. Residues 94 to 96 are interaction with target base in tRNA; the sequence is NPD. C99 acts as the Nucleophile in catalysis. C99 and C195 are disulfide-bonded. ATP is bound at residue G123. Residues 145–147 are interaction with tRNA; it reads KDQ. C195 serves as the catalytic Cysteine persulfide intermediate. The tract at residues 307-308 is interaction with tRNA; sequence RY.

This sequence belongs to the MnmA/TRMU family.

It is found in the cytoplasm. The enzyme catalyses S-sulfanyl-L-cysteinyl-[protein] + uridine(34) in tRNA + AH2 + ATP = 2-thiouridine(34) in tRNA + L-cysteinyl-[protein] + A + AMP + diphosphate + H(+). In terms of biological role, catalyzes the 2-thiolation of uridine at the wobble position (U34) of tRNA, leading to the formation of s(2)U34. The chain is tRNA-specific 2-thiouridylase MnmA from Xanthomonas axonopodis pv. citri (strain 306).